Here is an 862-residue protein sequence, read N- to C-terminus: DNA topoisomerase 3-beta-1 (862 aa).

A Toprim domain is found at T3 to S153. In terms of domain architecture, Topo IA-type catalytic spans D171 to F593. Y336 (O-(5'-phospho-DNA)-tyrosine intermediate) is an active-site residue. Positions P821–K851 are enriched in basic residues. The segment at P821–M854 is disordered.

Belongs to the type IA topoisomerase family. As to expression, isoform 1 is found in testis, heart and skeletal muscle. A 4 kb transcript which probably represents isoform 2 is found in thymus, kidney and pancreas.

It catalyses the reaction ATP-independent breakage of single-stranded DNA, followed by passage and rejoining.. Functionally, releases the supercoiling and torsional tension of DNA introduced during the DNA replication and transcription by transiently cleaving and rejoining one strand of the DNA duplex. Introduces a single-strand break via transesterification at a target site in duplex DNA. The scissile phosphodiester is attacked by the catalytic tyrosine of the enzyme, resulting in the formation of a DNA-(5'-phosphotyrosyl)-enzyme intermediate and the expulsion of a 3'-OH DNA strand. The free DNA strand than undergoes passage around the unbroken strand thus removing DNA supercoils. Finally, in the religation step, the DNA 3'-OH attacks the covalent intermediate to expel the active-site tyrosine and restore the DNA phosphodiester backbone. Possesses negatively supercoiled DNA relaxing activity. The polypeptide is DNA topoisomerase 3-beta-1 (TOP3B) (Homo sapiens (Human)).